A 134-amino-acid chain; its full sequence is Profilin-2 (134 aa).

Residues C13 and C118 are joined by a disulfide bond. Positions 84-100 match the Involved in PIP2 interaction motif; sequence AVIRGKKGSGGITIKKT. At T114 the chain carries Phosphothreonine.

This sequence belongs to the profilin family. In terms of assembly, occurs in many kinds of cells as a complex with monomeric actin in a 1:1 ratio. Post-translationally, phosphorylated by MAP kinases.

The protein localises to the cytoplasm. It is found in the cytoskeleton. Binds to actin and affects the structure of the cytoskeleton. At high concentrations, profilin prevents the polymerization of actin, whereas it enhances it at low concentrations. The polypeptide is Profilin-2 (Olea europaea (Common olive)).